Reading from the N-terminus, the 285-residue chain is RNA exonuclease 4 (285 aa).

Residues 1 to 14 (MAKLSQNWKKLSSK) show a composition bias toward polar residues. The segment at 1–35 (MAKLSQNWKKLSSKIQDKPKNGSVKKPTLKGKISK) is disordered. Positions 116-267 (YVAIDCEFVG…EDARATMLLF (152 aa)) constitute an Exonuclease domain.

It belongs to the REXO4 family.

It localises to the nucleus. Exoribonuclease involved in ribosome biosynthesis. Involved in the processing of ITS1, the internal transcribed spacer localized between the 18S and 5.8S rRNAs. The sequence is that of RNA exonuclease 4 (REX4) from Candida albicans (strain SC5314 / ATCC MYA-2876) (Yeast).